Here is a 3011-residue protein sequence, read N- to C-terminus: Genome polyprotein (3011 aa).

An N-acetylserine; by host modification is found at S2. The interval 2–23 is interaction with STAT1; sequence STIPKPQRKTKRNTNRRPQDVK. Residues 2–58 form an interaction with EIF2AK2/PKR region; it reads STIPKPQRKTKRNTNRRPQDVKFPGGGQIVGGVYLLPRRGPRLGVRATRKTSERSQP. The interaction with DDX3X stretch occupies residues 2–59; sequence STIPKPQRKTKRNTNRRPQDVKFPGGGQIVGGVYLLPRRGPRLGVRATRKTSERSQPR. Positions 2 to 75 are disordered; sequence STIPKPQRKT…PKVRRPEGRT (74 aa). Residues 2–168 lie on the Cytoplasmic side of the membrane; the sequence is STIPKPQRKT…EDGVNYATGN (167 aa). Short sequence motifs (nuclear localization signal) lie at residues 5-13 and 38-43; these read PKPQRKTKR and PRRGPR. A compositionally biased stretch (basic residues) spans 7–16; it reads PQRKTKRNTN. Residues 32–47 are compositionally biased toward low complexity; it reads GGVYLLPRRGPRLGVR. S53 carries the phosphoserine; by host modification. 2 consecutive short sequence motifs (nuclear localization signal) follow at residues 58–64 and 66–71; these read PRGRRQP and PKVRRP. Positions 58–68 are enriched in basic residues; it reads PRGRRQPIPKV. S99 is modified (phosphoserine; by host). The segment at 112–152 is important for endoplasmic reticulum and mitochondrial localization; it reads PRRRSRNLGKVIDTLTCGFADLMGYIPLVGAPLGGAARALA. Position 116 is a phosphoserine; by host PKA (S116). Residues 122-173 are interaction with APOA2; it reads VIDTLTCGFADLMGYIPLVGAPLGGAARALAHGVRVLEDGVNYATGNLPGCS. The tract at residues 164–167 is important for lipid droplets localization; that stretch reads YATG. Residues 169 to 189 form a helical membrane-spanning segment; sequence LPGCSFSIFLLALLSCLTVPA. A propeptide spans 178–191 (ER anchor for the core protein, removed in mature form by host signal peptidase); the sequence is LLALLSCLTVPASA. The Lumenal segment spans residues 190–358; that stretch reads SAYQVRNSTG…AGAHWGVLAG (169 aa). N-linked (GlcNAc...) asparagine; by host glycosylation is found at N196, N209, and N234. Residues 265-296 are important for fusion; sequence LVGSATLCSALYVGDLCGSVFLIGQLFTFSPR. N-linked (GlcNAc...) asparagine; by host glycosylation is present at N305. The chain crosses the membrane as a helical span at residues 359 to 379; that stretch reads IAYFSMVGNWAKVLVVLLLFA. Residues 380 to 725 are Lumenal-facing; sequence GVDAETIVSG…WEYVVLLFLL (346 aa). The HVR1 stretch occupies residues 385-411; sequence TIVSGGQAARAMSGLVSLFTPGAKQNI. 4 N-linked (GlcNAc...) (high mannose) asparagine; by host glycosylation sites follow: N417, N423, N430, and N448. 4 disulfides stabilise this stretch: C429-C552, C452-C459, C486-C494, and C503-C508. The HVR2 stretch occupies residues 474-479; sequence HANGSG. Residues 480–493 are CD81-binding 1; sequence PDQRPYCWHYPPKP. Residue N532 is glycosylated (N-linked (GlcNAc...) (high mannose) asparagine; by host). N540 carries N-linked (GlcNAc...) asparagine; by host glycosylation. A CD81-binding 2 region spans residues 544–551; sequence PPLGNWFG. A glycan (N-linked (GlcNAc...) (high mannose) asparagine; by host) is linked at N556. A disulfide bridge links C564 with C569. The N-linked (GlcNAc...) (high mannose) asparagine; by host glycan is linked to N576. Disulfide bonds link C581-C585, C597-C620, and C607-C644. N623 and N645 each carry an N-linked (GlcNAc...) (high mannose) asparagine; by host glycan. An intrachain disulfide couples C652 to C677. The interval 660-671 is PKR/eIF2-alpha phosphorylation homology domain (PePHD); that stretch reads SELSPLLLSTTQ. The chain crosses the membrane as a helical span at residues 726 to 746; the sequence is LADARVCSCLWMMLLISQAEA. At 747–757 the chain is on the lumenal side; that stretch reads ALENLVILNAA. The chain crosses the membrane as a helical span at residues 758-778; that stretch reads SLAGTRGLVSFLVFFCFAWYL. Residues 779–781 lie on the Cytoplasmic side of the membrane; that stretch reads KGR. The helical transmembrane segment at 782-803 threads the bilayer; the sequence is WVPGAAYALYGMWPLLLLLLAL. At 804 to 813 the chain is on the lumenal side; that stretch reads PQRAYALDTE. Residues 814-834 traverse the membrane as a helical segment; that stretch reads VAASCGGVVLVGLMALTLSPY. Over 835 to 838 the chain is Cytoplasmic; it reads YKRC. Residues 839-859 traverse the membrane as a helical segment; that stretch reads ISWCLWWLQYFLTRVEAQLHV. The Lumenal segment spans residues 860 to 881; that stretch reads WVPPLNVRGGRDAVILLMCVVH. A helical transmembrane segment spans residues 882-902; the sequence is PTLVFDITKLLLAVLGPLWIL. The Peptidase C18 domain maps to 903–1026; the sequence is QASLLKVPYF…GMVSKGWRLL (124 aa). Residues 903–1657 are Cytoplasmic-facing; sequence QASLLKVPYF…CMSADLEVVT (755 aa). The segment at 904 to 1206 is protease NS2-3; it reads ASLLKVPYFV…PVESLETTMR (303 aa). C922 carries the S-palmitoyl cysteine; by host lipid modification. Positions 929–949 are interaction with host SCPS1; sequence VGGHYVQMAIIKLGALTGTYV. Residues H952, E972, and C993 each act as for protease NS2 activity; shared with dimeric partner in the active site. The region spanning 1027–1208 is the Peptidase S29 domain; sequence APITAYAQQT…ESLETTMRSP (182 aa). Active-site charge relay system; for serine protease NS3 activity residues include H1083 and D1107. Residues C1123 and C1125 each coordinate Zn(2+). Catalysis depends on S1165, which acts as the Charge relay system; for serine protease NS3 activity. 2 residues coordinate Zn(2+): C1171 and H1175. A Helicase ATP-binding domain is found at 1217–1369; sequence PAVPQSFQVA…ANIEEVALST (153 aa). 1230-1237 serves as a coordination point for ATP; that stretch reads APTGSGKS. Mg(2+) contacts are provided by S1237 and E1317. The DECH box signature appears at 1316–1319; it reads DECH. The interval 1486–1497 is RNA-binding; the sequence is QRRGRTGRGKPG. A helical membrane pass occupies residues 1658 to 1678; that stretch reads STWVLVGGVLAALAAYCLSTG. The tract at residues 1679-1690 is NS3-binding; sequence CVVIVGRIVLSG. At 1679–1805 the chain is on the cytoplasmic side; sequence CVVIVGRIVL…AVTSPLTTSQ (127 aa). A helical transmembrane segment spans residues 1806 to 1824; the sequence is TLLFNILGGWVAAQLAAPG. Residues 1825–1828 lie on the Lumenal side of the membrane; that stretch reads AATA. The chain crosses the membrane as a helical span at residues 1829 to 1849; that stretch reads FVGSGLAGAAVGSVGLGRVLV. Residue D1850 is a topological domain, cytoplasmic. Residues 1851 to 1871 traverse the membrane as a helical segment; that stretch reads ILAGYGAGVAGALVAFKIMSG. Over 1872–1881 the chain is Lumenal; it reads ELPSTEDLVN. Residues 1882-1902 form a helical membrane-spanning segment; sequence LLPAILSPGALVVGVVCAAIL. At 1903–1972 the chain is on the cytoplasmic side; it reads RRHVGPGEGA…WLSSESTTPC (70 aa). Residue C1972 is the site of S-palmitoyl cysteine; by host attachment. The stretch at 1973–2002 is an intramembrane region; that stretch reads SGSWLRDIWDWICEVLSDFKTWLKTKLMPH. At 2003-2990 the chain is on the cytoplasmic side; it reads LPGIPFVSCQ…YHSVSHARPR (988 aa). Zn(2+)-binding residues include C2011, C2029, C2031, and C2052. The interval 2120–2208 is FKBP8-binding; it reads EFFTELDGVR…ASSSASQLSA (89 aa). Residues 2120–2332 are transcriptional activation; the sequence is EFFTELDGVR…PVPPPRKKRT (213 aa). Positions 2135–2139 are interaction with non-structural protein 4A; the sequence is PPCKP. A disordered region spans residues 2187 to 2207; the sequence is GRRLARGSPPSEASSSASQLS. The segment at 2189–2441 is interaction with host SKP2; it reads RLARGSPPSE…TPCAAEEQKL (253 aa). S2194 carries the phosphoserine; by host; in p56 modification. A phosphoserine; by host; in p58 mark is found at S2197, S2201, S2204, S2207, and S2210. Positions 2210–2249 are ISDR; sequence SLKATCTINHDSPDAELIEANLLWRQEMGGNITRVESENK. The segment at 2210–2275 is interaction with EIF2AK2/PKR; the sequence is SLKATCTINH…REISVPAEIL (66 aa). Positions 2249 to 2306 are NS4B-binding; that stretch reads KVVILDSFDPLVAEEDEREISVPAEILRKSRRFTQALPIWARPDYNPPLIETWKKPNY. A disordered region spans residues 2312 to 2334; it reads HGCPLPPPQSPPVPPPRKKRTVV. Positions 2315–2326 are enriched in pro residues; that stretch reads PLPPPQSPPVPP. Positions 2322 to 2325 match the SH3-binding motif; the sequence is PPVP. The Nuclear localization signal signature appears at 2326-2334; that stretch reads PPRKKRTVV. K2350 participates in a covalent cross-link: Glycyl lysine isopeptide (Lys-Gly) (interchain with G-Cter in ubiquitin). Residues 2351–2369 show a composition bias toward low complexity; it reads SFGSSSTSGITGDNTTTSS. A disordered region spans residues 2351–2408; sequence SFGSSSTSGITGDNTTTSSEPAPSGCSPDSDAESYSSMPPLEGEPGDPDLSDGSWSTV. Positions 2354–2377 are V3; that stretch reads SSSTSGITGDNTTTSSEPAPSGCS. Phosphoserine; by host occurs at positions 2449 and 2462. In terms of domain architecture, RdRp catalytic spans 2634 to 2752; that stretch reads PMGFSYDTRC…ICESAGVQED (119 aa). The Mg(2+) site is built by D2640, D2738, and D2739. The helical transmembrane segment at 2991–3011 threads the bilayer; sequence WFWFCLLLLAAGVGIYLLPNR.

Belongs to the hepacivirus polyprotein family. Homooligomer. Interacts with E1 (via C-terminus). Interacts with the non-structural protein 5A. Interacts (via N-terminus) with host STAT1 (via SH2 domain); this interaction results in decreased STAT1 phosphorylation and ubiquitin-mediated proteasome-dependent STAT1 degradation, leading to decreased IFN-stimulated gene transcription. Interacts with host STAT3; this interaction constitutively activates STAT3. Interacts with host LTBR receptor. Interacts with host TNFRSF1A receptor and possibly induces apoptosis. Interacts with host HNRPK. Interacts with host YWHAE. Interacts with host UBE3A/E6AP. Interacts with host DDX3X. Interacts with host APOA2. Interacts with host RXRA protein. Interacts with host SP110 isoform 3/Sp110b; this interaction sequesters the transcriptional corepressor SP110 away from the nucleus. Interacts with host CREB3 nuclear transcription protein; this interaction triggers cell transformation. Interacts with host ACY3. Interacts with host C1QR1. Interacts with host RBM24; this interaction, which enhances the interaction of the mature core protein with 5'-UTR, may inhibit viral translation and favor replication. Interacts with host EIF2AK2/PKR; this interaction induces the autophosphorylation of EIF2AK2. Part of the viral assembly initiation complex composed of NS2, E1, E2, NS3, NS4A, NS5A and the mature core protein. In terms of assembly, forms a heterodimer with envelope glycoprotein E2. Interacts with mature core protein. Interacts with protease NS2. The heterodimer E1/E2 interacts with host CLDN1; this interaction plays a role in viral entry into host cell. Interacts with host SPSB2 (via C-terminus). Part of the viral assembly initiation complex composed of NS2, E1, E2, NS3, NS4A, NS5A and the mature core protein. Interacts with host NEURL3; this interaction prevents E1 binding to glycoprotein E2. As to quaternary structure, forms a heterodimer with envelope glycoprotein E1. Interacts with host CD81 and SCARB1 receptors; these interactions play a role in viral entry into host cell. Interacts with host EIF2AK2/PKR; this interaction inhibits EIF2AK2 and probably allows the virus to evade the innate immune response. Interacts with host CD209/DC-SIGN and CLEC4M/DC-SIGNR. Interact with host SPCS1; this interaction is essential for viral particle assembly. Interacts with protease NS2. The heterodimer E1/E2 interacts with host CLDN1; this interaction plays a role in viral entry into host cell. Part of the viral assembly initiation complex composed of NS2, E1, E2, NS3, NS4A, NS5A and the mature core protein. Interacts with host SLC3A2/4F2hc; the interaction may facilitate viral entry into host cell. Interacts with human PLSCR1. Homohexamer. Homoheptamer. Interacts with protease NS2. In terms of assembly, homodimer. Interacts with host SPCS1; this interaction is essential for viral particle assembly. Interacts with envelope glycoprotein E1. Interacts with envelope glycoprotein E2. Interacts with viroporin p7. Interacts with serine protease/helicase NS3. Part of the replication complex composed of NS2, NS3, NS4A, NS4B, NS5A and the RNA-directed RNA polymerase embedded in an ER-derived membranous web. Part of the viral assembly initiation complex composed of NS2, E1, E2, NS3, NS4A, NS5A and the mature core protein. As to quaternary structure, interacts with protease NS2. Interacts with non-structural protein 4A; this interaction stabilizes the folding of NS3 serine protease. NS3-NS4A interaction is essential for NS3 activation and allows membrane anchorage of the latter. NS3/NS4A complex also prevents phosphorylation of host IRF3, thus preventing the establishment of dsRNA induced antiviral state. Interacts with host MAVS; this interaction leads to the cleavage and inhibition of host MAVS. Interacts with host TICAM1; this interaction leads to the cleavage and inhibition of host TICAM1. Interacts with host TANK-binding kinase/TBK1; this interaction results in the inhibition of the association between TBK1 and IRF3, which leads to the inhibition of IRF3 activation. Interacts with host RBM24. Part of the replication complex composed of NS2, NS3, NS4A, NS4B, NS5A and the RNA-directed RNA polymerase embedded in an ER-derived membranous web. Part of the viral assembly initiation complex composed of NS2, E1, E2, NS3, NS4A, NS5A and the mature core protein. Interacts with NS3 serine protease; this interaction stabilizes the folding of NS3 serine protease. NS3-NS4A interaction is essential for NS3 activation and allows membrane anchorage of the latter. Interacts with non-structural protein 5A (via N-terminus). Part of the replication complex composed of NS2, NS3, NS4A, NS4B, NS5A and the RNA-directed RNA polymerase embedded in an ER-derived membranous web. Part of the viral assembly initiation complex composed of NS2, E1, E2, NS3, NS4A, NS5A and the mature core protein. In terms of assembly, homomultimer. Interacts with non-structural protein NS5A. Interacts with host PLA2G4C; this interaction likely initiates the recruitment of replication complexes to lipid droplets. Interacts with host STING; this interaction disrupts the interaction between STING and TBK1 thereby suppressing the interferon signaling. Part of the replication complex composed of NS2, NS3, NS4A, NS4B, NS5A and the RNA-directed RNA polymerase embedded in an ER-derived membranous web. As to quaternary structure, monomer. Homodimer; dimerization is required for RNA-binding. Interacts with the mature core protein. Interacts (via N-terminus) with non-structural protein 4A. Interacts with non-structural protein 4B. Interacts (via region D2) with RNA-directed RNA polymerase. Part of the viral assembly initiation complex composed of NS2, E1, E2, NS3, NS4A, NS5A and the mature core protein. Part of the replication complex composed of NS2, NS3, NS4A, NS4B, NS5A and the RNA-directed RNA polymerase embedded in an ER-derived membranous web. Interacts with host GRB2. Interacts with host BIN1. Interacts with host PIK3R1. Interacts with host SRCAP. Interacts with host FKBP8. Interacts (via C-terminus) with host VAPB (via MSP domain). Interacts with host EIF2AK2/PKR; this interaction leads to disruption of EIF2AK2 dimerization by NS5A and probably allows the virus to evade the innate immune response. Interacts (via N-terminus) with host PACSIN2 (via N-terminus); this interaction attenuates protein kinase C alpha-mediated phosphorylation of PACSIN2 by disrupting the interaction between PACSIN2 and PRKCA. Interacts (via N-terminus) with host SRC kinase (via SH2 domain). Interacts with most Src-family kinases. Interacts with host IFI27 and SKP2; promotes the ubiquitin-mediated proteasomal degradation of NS5A. Interacts with host GPS2. Interacts with host TNFRSF21; this interaction allows the modulation by the virus of JNK, p38 MAPK, STAT3, and Akt signaling pathways in a DR6-dependent manner. Interacts (via N-terminus) with host CIDEB (via N-terminus); this interaction seems to regulate the association of HCV particles with APOE. Interacts with host CHKA/Choline Kinase-alpha; CHKA bridges host PI4KA and NS5A and potentiates NS5A-stimulated PI4KA activity, which then facilitates the targeting of the ternary complex to the ER for viral replication. Interacts with host SPSB2 (via C-terminus); this interaction targets NS5A for ubiquitination and degradation. Interacts with host RAB18; this interaction may promote the association of NS5A and other replicase components with lipid droplets. Interacts (via region D2) with host PPIA/CYPA; the interaction stimulates RNA-binding ability of NS5A and is dependent on the peptidyl-prolyl cis-trans isomerase activity of PPIA/CYPA. Interacts with host TRIM14; this interaction induces the degradation of NS5A. Homooligomer. Interacts with non-structural protein 5A. Interacts with host VAPB. Interacts with host PRK2/PKN2. Interacts with host HNRNPA1 and SEPT6; these interactions facilitate viral replication. Part of the replication complex composed of NS2, NS3, NS4A, NS4B, NS5A and the RNA-directed RNA polymerase. Zn(2+) is required as a cofactor. Requires Mg(2+) as cofactor. Post-translationally, specific enzymatic cleavages in vivo yield mature proteins. The structural proteins, core, E1, E2 and p7 are produced by proteolytic processing by host signal peptidases. The core protein precursor is synthesized as a 23 kDa, which is retained in the ER membrane through the hydrophobic signal peptide. Cleavage by the signal peptidase releases the 21 kDa mature core protein. The cleavage of the core protein precursor occurs between aminoacids 176 and 188 but the exact cleavage site is not known. Some degraded forms of the core protein appear as well during the course of infection. The other proteins (p7, NS2, NS3, NS4A, NS4B, NS5A and NS5B) are cleaved by the viral proteases. Autoprocessing between NS2 and NS3 is mediated by the NS2 cysteine protease catalytic domain and regulated by the NS3 N-terminal domain. Phosphorylated by host PKC and PKA. In terms of processing, ubiquitinated; mediated by UBE3A and leading to core protein subsequent proteasomal degradation. Post-translationally, highly N-glycosylated. Palmitoylation is required for NS2/3 autoprocessing and E2 recruitment to membranes. In terms of processing, palmitoylated. This modification may play a role in its polymerization or in protein-protein interactions. Post-translationally, phosphorylated on serines in a basal form termed p56. p58 is a hyperphosphorylated form of p56. p56 and p58 coexist in the cell in roughly equivalent amounts. Hyperphosphorylation is dependent on the presence of NS4A. Host CSNK1A1/CKI-alpha or RPS6KB1 kinases may be responsible for NS5A phosphorylation. Tyrosine phosphorylation is essential for the interaction with host SRC. In terms of processing, the N-terminus is phosphorylated by host PRK2/PKN2.

The protein localises to the host endoplasmic reticulum membrane. The protein resides in the host mitochondrion membrane. It is found in the virion. Its subcellular location is the host cytoplasm. It localises to the host nucleus. The protein localises to the host lipid droplet. The protein resides in the virion membrane. It is found in the host mitochondrion. Its subcellular location is the host cell membrane. It localises to the host perinuclear region. The enzyme catalyses Hydrolysis of four peptide bonds in the viral precursor polyprotein, commonly with Asp or Glu in the P6 position, Cys or Thr in P1 and Ser or Ala in P1'.. It catalyses the reaction a ribonucleoside 5'-triphosphate + H2O = a ribonucleoside 5'-diphosphate + phosphate + H(+). The catalysed reaction is ATP + H2O = ADP + phosphate + H(+). It carries out the reaction RNA(n) + a ribonucleoside 5'-triphosphate = RNA(n+1) + diphosphate. Inhibited by the antiviral drug hexamethylene amiloride. Inhibition by amantadine appears to be genotype-dependent. Also inhibited by long-alkyl-chain iminosugar derivatives. Its activity is regulated as follows. Activity is up-regulated by PRK2/PKN2-mediated phosphorylation. Its function is as follows. Packages viral RNA to form a viral nucleocapsid, and promotes virion budding. Participates in the viral particle production as a result of its interaction with the non-structural protein 5A. Binds RNA and may function as a RNA chaperone to induce the RNA structural rearrangements taking place during virus replication. Modulates viral translation initiation by interacting with viral IRES and 40S ribosomal subunit. Affects various cell signaling pathways, host immunity and lipid metabolism. Prevents the establishment of cellular antiviral state by blocking the interferon-alpha/beta (IFN-alpha/beta) and IFN-gamma signaling pathways and by blocking the formation of phosphorylated STAT1 and promoting ubiquitin-mediated proteasome-dependent degradation of STAT1. Activates STAT3 leading to cellular transformation. Regulates the activity of cellular genes, including c-myc and c-fos. May repress the promoter of p53, and sequester CREB3 and SP110 isoform 3/Sp110b in the cytoplasm. Represses cell cycle negative regulating factor CDKN1A, thereby interrupting an important check point of normal cell cycle regulation. Targets transcription factors involved in the regulation of inflammatory responses and in the immune response: suppresses TNF-induced NF-kappa-B activation, and activates AP-1. Binds to dendritic cells (DCs) via C1QR1, resulting in down-regulation of T-lymphocytes proliferation. Alters lipid metabolism by interacting with hepatocellular proteins involved in lipid accumulation and storage. Induces up-regulation of FAS promoter activity, and thereby contributes to the increased triglyceride accumulation in hepatocytes (steatosis). In terms of biological role, forms a heterodimer with envelope glycoprotein E2, which mediates virus attachment to the host cell, virion internalization through clathrin-dependent endocytosis and fusion with host membrane. Fusion with the host cell is most likely mediated by both E1 and E2, through conformational rearrangements of the heterodimer required for fusion rather than a classical class II fusion mechanism. E1/E2 heterodimer binds host apolipoproteins such as APOB and ApoE thereby forming a lipo-viro-particle (LVP). APOE associated to the LVP allows the initial virus attachment to cell surface receptors such as the heparan sulfate proteoglycans (HSPGs), syndecan-1 (SDC1), syndecan-1 (SDC2), the low-density lipoprotein receptor (LDLR) and scavenger receptor class B type I (SCARB1). The cholesterol transfer activity of SCARB1 allows E2 exposure and binding of E2 to SCARB1 and the tetraspanin CD81. E1/E2 heterodimer binding on CD81 activates the epithelial growth factor receptor (EGFR) signaling pathway. Diffusion of the complex E1-E2-EGFR-SCARB1-CD81 to the cell lateral membrane allows further interaction with Claudin 1 (CLDN1) and occludin (OCLN) to finally trigger HCV entry. Forms a heterodimer with envelope glycoprotein E1, which mediates virus attachment to the host cell, virion internalization through clathrin-dependent endocytosis and fusion with host membrane. Fusion with the host cell is most likely mediated by both E1 and E2, through conformational rearrangements of the heterodimer required for fusion rather than a classical class II fusion mechanism. The interaction between envelope glycoprotein E2 and host apolipoprotein E/APOE allows the proper assembly, maturation and infectivity of the viral particles. This interaction is probably promoted via the up-regulation of cellular autophagy by the virus. E1/E2 heterodimer binds host apolipoproteins such as APOB and APOE thereby forming a lipo-viro-particle (LVP). APOE associated to the LVP allows the initial virus attachment to cell surface receptors such as the heparan sulfate proteoglycans (HSPGs), syndecan-1 (SDC1), syndecan-1 (SDC2), the low-density lipoprotein receptor (LDLR) and scavenger receptor class B type I (SCARB1). The cholesterol transfer activity of SCARB1 allows E2 exposure and binding of E2 to SCARB1 and the tetraspanin CD81. E1/E2 heterodimer binding on CD81 activates the epithelial growth factor receptor (EGFR) signaling pathway. Diffusion of the complex E1-E2-EGFR-SCARB1-CD81 to the cell lateral membrane allows further interaction with Claudin 1 (CLDN1) and occludin (OCLN) to finally trigger HCV entry. Inhibits host EIF2AK2/PKR activation, preventing the establishment of an antiviral state. Viral ligand for CD209/DC-SIGN and CLEC4M/DC-SIGNR, which are respectively found on dendritic cells (DCs), and on liver sinusoidal endothelial cells and macrophage-like cells of lymph node sinuses. These interactions allow the capture of circulating HCV particles by these cells and subsequent facilitated transmission to permissive cells such as hepatocytes and lymphocyte subpopulations. The interaction between E2 and host amino acid transporter complex formed by SLC3A2 and SLC7A5/LAT1 may facilitate viral entry into host cell. Functionally, ion channel protein that acts as a viroporin and plays an essential role in the assembly, envelopment and secretion of viral particles. Regulates the host cell secretory pathway, which induces the intracellular retention of viral glycoproteins and favors assembly of viral particles. Creates a pore in acidic organelles and releases Ca(2+) and H(+) in the cytoplasm of infected cells, leading to a productive viral infection. High levels of cytoplasmic Ca(2+) may trigger membrane trafficking and transport of viral ER-associated proteins to viroplasms, sites of viral genome replication. This ionic imbalance induces the assembly of the inflammasome complex, which triggers the maturation of pro-IL-1beta into IL-1beta through the action of caspase-1. Targets also host mitochondria and induces mitochondrial depolarization. In addition of its role as a viroporin, acts as a lipid raft adhesion factor. Its function is as follows. Cysteine protease required for the proteolytic auto-cleavage between the non-structural proteins NS2 and NS3. The N-terminus of NS3 is required for the function of NS2 protease (active region NS2-3). Promotes the initiation of viral particle assembly by mediating the interaction between structural and non-structural proteins. In terms of biological role, displays three enzymatic activities: serine protease with a chymotrypsin-like fold, NTPase and RNA helicase. NS3 serine protease, in association with NS4A, is responsible for the cleavages of NS3-NS4A, NS4A-NS4B, NS4B-NS5A and NS5A-NS5B. The NS3/NS4A complex prevents phosphorylation of host IRF3, thus preventing the establishment of dsRNA induced antiviral state. The NS3/NS4A complex induces host amino acid transporter component SLC3A2, thus contributing to HCV propagation. NS3 RNA helicase binds to RNA and unwinds both dsDNA and dsRNA in the 3' to 5' direction, and likely resolves RNA complicated stable secondary structures in the template strand. Binds a single ATP and catalyzes the unzipping of a single base pair of dsRNA. Inhibits host antiviral proteins TBK1 and IRF3 thereby preventing the establishment of an antiviral state. Cleaves host MAVS/CARDIF thereby preventing the establishment of an antiviral state. Cleaves host TICAM1/TRIF, thereby disrupting TLR3 signaling and preventing the establishment of an antiviral state. Induces a specific membrane alteration that serves as a scaffold for the virus replication complex. This membrane alteration gives rise to the so-called ER-derived membranous web that contains the replication complex. NS4B self-interaction contributes to its function in membranous web formation. Promotes host TRIF protein degradation in a CASP8-dependent manner thereby inhibiting host TLR3-mediated interferon signaling. Disrupts the interaction between STING and TBK1 contributing to the inhibition of interferon signaling. Functionally, phosphorylated protein that is indispensable for viral replication and assembly. Both hypo- and hyperphosphorylated states are required for the viral life cycle. The hyperphosphorylated form of NS5A is an inhibitor of viral replication. Involved in RNA-binding and especially in binding to the viral genome. Zinc is essential for RNA-binding. Participates in the viral particle production as a result of its interaction with the mature viral core protein. Its interaction with host VAPB may target the viral replication complex to vesicles. Down-regulates viral IRES translation initiation. Mediates interferon resistance, presumably by interacting with and inhibiting host EIF2AK2/PKR. Prevents BIN1-induced apoptosis. Acts as a transcriptional activator of some host genes important for viral replication when localized in the nucleus. Via the interaction with host PACSIN2, modulates lipid droplet formation in order to promote virion assembly. Modulates TNFRSF21/DR6 signaling pathway for viral propagation. Its function is as follows. RNA-dependent RNA polymerase that performs primer-template recognition and RNA synthesis during viral replication. Initiates RNA transcription/replication at a flavin adenine dinucleotide (FAD), resulting in a 5'- FAD cap on viral RNAs. In this way, recognition of viral 5' RNA by host pattern recognition receptors can be bypassed, thereby evading activation of antiviral pathways. The sequence is that of Genome polyprotein from Hepatitis C virus genotype 1b (isolate HC-J1) (HCV).